Consider the following 156-residue polypeptide: MQIIEGKLQLQGNERVAILTSRFNHIITDRLQEGAMDCFKRHGGDEDLLDIVLVPGAYELPFILDKLLESEKYDGVCVLGAIIRGGTPHFDYVSAEATKGIAHAMLKYSMPVSFGVLTTDNIEQAIERAGSKAGNKGFEAMSTLIELLSLCQTLKG.

Residues phenylalanine 23, 57–59 (AYE), and 81–83 (AII) each bind 5-amino-6-(D-ribitylamino)uracil. 86-87 (GT) serves as a coordination point for (2S)-2-hydroxy-3-oxobutyl phosphate. Residue histidine 89 is the Proton donor of the active site. 5-amino-6-(D-ribitylamino)uracil is bound at residue phenylalanine 114. Arginine 128 lines the (2S)-2-hydroxy-3-oxobutyl phosphate pocket.

This sequence belongs to the DMRL synthase family.

The catalysed reaction is (2S)-2-hydroxy-3-oxobutyl phosphate + 5-amino-6-(D-ribitylamino)uracil = 6,7-dimethyl-8-(1-D-ribityl)lumazine + phosphate + 2 H2O + H(+). It functions in the pathway cofactor biosynthesis; riboflavin biosynthesis; riboflavin from 2-hydroxy-3-oxobutyl phosphate and 5-amino-6-(D-ribitylamino)uracil: step 1/2. Catalyzes the formation of 6,7-dimethyl-8-ribityllumazine by condensation of 5-amino-6-(D-ribitylamino)uracil with 3,4-dihydroxy-2-butanone 4-phosphate. This is the penultimate step in the biosynthesis of riboflavin. The sequence is that of 6,7-dimethyl-8-ribityllumazine synthase from Helicobacter pylori (strain ATCC 700392 / 26695) (Campylobacter pylori).